Here is a 471-residue protein sequence, read N- to C-terminus: FERM domain-containing protein 8 (471 aa).

3 disordered regions span residues 1 to 23, 381 to 416, and 451 to 471; these read MEGD…RGSV, AATG…RRQN, and TRQA…LEQG. An FERM domain is found at 31–382; the sequence is QDLLVYLAND…ELRSVSESAA (352 aa).

The protein resides in the cytoplasm. It is found in the cytosol. Its subcellular location is the cell membrane. In terms of biological role, promotes the cell surface stability of rhomboid 5 homologs and prevents their degradation via the endolysosomal pathway. By acting on rhomboid 5 homologs, involved in ADAM17-mediated ligand shedding. Negatively regulates the Wnt/beta-catenin signaling pathway. In Danio rerio (Zebrafish), this protein is FERM domain-containing protein 8 (frmd8).